The primary structure comprises 219 residues: MSDHRHRFLQLALTADALRFGQFTLKSGRLSPYFFNAGRFDSGSLLSQLGACYSDAIDATGIKYDVVFGPAYKGIPLATAMACELAQRGRELPLSFNRKEAKAHGEGGQLIGADMNGKRVLIVDDVITAGTAIREALGIIRDAGGIPAGIVVALDRQEIASDTDHRSAAQAVAEEAGIPVIAVATLADLLDFASGNPELVGYRQPLEAYRAQYGVRSIR.

Position 26 (Lys26) interacts with 5-phospho-alpha-D-ribose 1-diphosphate. 34–35 (FF) contacts orotate. Residues 72–73 (YK), Arg98, Lys99, Lys102, His104, and 124–132 (DDVITAGTA) contribute to the 5-phospho-alpha-D-ribose 1-diphosphate site. 2 residues coordinate orotate: Thr128 and Arg156.

It belongs to the purine/pyrimidine phosphoribosyltransferase family. PyrE subfamily. As to quaternary structure, homodimer. Requires Mg(2+) as cofactor.

The enzyme catalyses orotidine 5'-phosphate + diphosphate = orotate + 5-phospho-alpha-D-ribose 1-diphosphate. Its pathway is pyrimidine metabolism; UMP biosynthesis via de novo pathway; UMP from orotate: step 1/2. Its function is as follows. Catalyzes the transfer of a ribosyl phosphate group from 5-phosphoribose 1-diphosphate to orotate, leading to the formation of orotidine monophosphate (OMP). In Stenotrophomonas maltophilia (strain R551-3), this protein is Orotate phosphoribosyltransferase.